The sequence spans 297 residues: Acetaldehyde dehydrogenase (297 aa).

18 to 21 (TGNI) serves as a coordination point for NAD(+). Catalysis depends on cysteine 133, which acts as the Acyl-thioester intermediate. NAD(+) is bound by residues 165 to 173 (SAGPATRLN) and asparagine 275.

It belongs to the acetaldehyde dehydrogenase family.

It catalyses the reaction acetaldehyde + NAD(+) + CoA = acetyl-CoA + NADH + H(+). This Spirochaeta aurantia protein is Acetaldehyde dehydrogenase.